We begin with the raw amino-acid sequence, 171 residues long: Ribosome maturation factor RimM (171 aa).

The 74-residue stretch at 97–170 folds into the PRC barrel domain; that stretch reads KLNYFSWDHY…IIYMKLPVGL (74 aa).

The protein belongs to the RimM family. In terms of assembly, binds ribosomal protein uS19.

It is found in the cytoplasm. Functionally, an accessory protein needed during the final step in the assembly of 30S ribosomal subunit, possibly for assembly of the head region. Essential for efficient processing of 16S rRNA. May be needed both before and after RbfA during the maturation of 16S rRNA. It has affinity for free ribosomal 30S subunits but not for 70S ribosomes. The protein is Ribosome maturation factor RimM of Azobacteroides pseudotrichonymphae genomovar. CFP2.